The chain runs to 236 residues: 2-C-methyl-D-erythritol 4-phosphate cytidylyltransferase (236 aa).

Belongs to the IspD/TarI cytidylyltransferase family. IspD subfamily.

The catalysed reaction is 2-C-methyl-D-erythritol 4-phosphate + CTP + H(+) = 4-CDP-2-C-methyl-D-erythritol + diphosphate. Its pathway is isoprenoid biosynthesis; isopentenyl diphosphate biosynthesis via DXP pathway; isopentenyl diphosphate from 1-deoxy-D-xylulose 5-phosphate: step 2/6. Functionally, catalyzes the formation of 4-diphosphocytidyl-2-C-methyl-D-erythritol from CTP and 2-C-methyl-D-erythritol 4-phosphate (MEP). This is 2-C-methyl-D-erythritol 4-phosphate cytidylyltransferase from Alkaliphilus oremlandii (strain OhILAs) (Clostridium oremlandii (strain OhILAs)).